The following is a 334-amino-acid chain: Transcription factor TGA2.1 (334 aa).

Polar residues predominate over residues 1 to 13 (MADASSRTDTSIV). A disordered region spans residues 1–49 (MADASSRTDTSIVVDNDDKNHQLENGHSGAVMASNSSDRSDRSDKLMDQ). The span at 38–49 (DRSDRSDKLMDQ) shows a compositional bias: basic and acidic residues. Positions 48-92 (DQKTIRRLAQNREAARKSRLRKKAYVQQLESSKLKLAQLEQELQK) constitute a bZIP domain. Residues 50 to 70 (KTIRRLAQNREAARKSRLRKK) are basic motif. The segment at 76-90 (LESSKLKLAQLEQEL) is leucine-zipper. The region spanning 115 to 331 (ALTFDLEYTR…RALSSLWLAR (217 aa)) is the DOG1 domain.

It belongs to the bZIP family. Interacts with NPR1/NH1 and NPR3/NH3.

The protein localises to the nucleus. In terms of biological role, plays a negative role in rice basal defense responses to the bacterial blight pathogen Xanthomomas oryzae pv. oryzae (Xoo). May function in both positive and negative regulation of rice defense genes. Binds DNA in vitro. Acts as a transcriptional activator when bound to NPR1/NH1 in vitro. Binds to the promoter sequence of CRK10 in vitro. The chain is Transcription factor TGA2.1 from Oryza sativa subsp. japonica (Rice).